We begin with the raw amino-acid sequence, 128 residues long: Small ribosomal subunit protein eS8 (128 aa).

The protein belongs to the eukaryotic ribosomal protein eS8 family. In terms of assembly, part of the 30S ribosomal subunit.

The protein is Small ribosomal subunit protein eS8 of Methanococcus vannielii (strain ATCC 35089 / DSM 1224 / JCM 13029 / OCM 148 / SB).